Reading from the N-terminus, the 392-residue chain is Galactokinase (392 aa).

Residues R37, E43, H44, and D46 each coordinate alpha-D-galactose. ATP is bound by residues G136, G138, S140, and S141. Residue D186 participates in alpha-D-galactose binding. The active-site Proton acceptor is D186. S230 carries the phosphoserine modification. Y236 contacts alpha-D-galactose.

This sequence belongs to the GHMP kinase family. GalK subfamily. Homodimer.

It carries out the reaction alpha-D-galactose + ATP = alpha-D-galactose 1-phosphate + ADP + H(+). The protein operates within carbohydrate metabolism; galactose metabolism. Its function is as follows. Catalyzes the transfer of a phosphate from ATP to alpha-D-galactose and participates in the first committed step in the catabolism of galactose. The chain is Galactokinase (Galk1) from Mus musculus (Mouse).